The chain runs to 401 residues: Nicotinate phosphoribosyltransferase (401 aa).

The residue at position 224 (histidine 224) is a Phosphohistidine; by autocatalysis.

Belongs to the NAPRTase family. Transiently phosphorylated on a His residue during the reaction cycle. Phosphorylation strongly increases the affinity for substrates and increases the rate of nicotinate D-ribonucleotide production. Dephosphorylation regenerates the low-affinity form of the enzyme, leading to product release.

The enzyme catalyses nicotinate + 5-phospho-alpha-D-ribose 1-diphosphate + ATP + H2O = nicotinate beta-D-ribonucleotide + ADP + phosphate + diphosphate. It participates in cofactor biosynthesis; NAD(+) biosynthesis; nicotinate D-ribonucleotide from nicotinate: step 1/1. Its function is as follows. Catalyzes the synthesis of beta-nicotinate D-ribonucleotide from nicotinate and 5-phospho-D-ribose 1-phosphate at the expense of ATP. The protein is Nicotinate phosphoribosyltransferase of Pseudomonas putida (strain ATCC 700007 / DSM 6899 / JCM 31910 / BCRC 17059 / LMG 24140 / F1).